The chain runs to 79 residues: Cell division topological specificity factor (79 aa).

This sequence belongs to the MinE family.

Its function is as follows. Prevents the cell division inhibition by proteins MinC and MinD at internal division sites while permitting inhibition at polar sites. This ensures cell division at the proper site by restricting the formation of a division septum at the midpoint of the long axis of the cell. In Nitratiruptor sp. (strain SB155-2), this protein is Cell division topological specificity factor.